Consider the following 177-residue polypeptide: Outer membrane lipoprotein Blc (177 aa).

The signal sequence occupies residues 1 to 18 (MRILPVVAAVTAAFLVVA). The N-palmitoyl cysteine moiety is linked to residue Cys-19. A lipid anchor (S-diacylglycerol cysteine) is attached at Cys-19.

Belongs to the calycin superfamily. Lipocalin family. In terms of assembly, homodimer.

It is found in the cell outer membrane. Its function is as follows. Involved in the storage or transport of lipids necessary for membrane maintenance under stressful conditions. Displays a binding preference for lysophospholipids. This Citrobacter freundii protein is Outer membrane lipoprotein Blc.